Consider the following 439-residue polypeptide: Gnt-II system L-idonate transporter (439 aa).

Over 1–11 (MPLIIIAAGVA) the chain is Periplasmic. A helical membrane pass occupies residues 12-34 (LLLILMIGFKVNGFIALVLVAAV). Residues 35–53 (VGFAEGMDAQAVLHSIQNG) are Cytoplasmic-facing. Residues 54-76 (IGSTLGGLAMILGFGAMLGKLIS) form a helical membrane-spanning segment. At 77–96 (DTGAAQRIATTLIATFGKKR) the chain is on the periplasmic side. The chain crosses the membrane as a helical span at residues 97–114 (VQWALVITGLVVGLAMFF). The Cytoplasmic segment spans residues 115-118 (EVGF). Residues 119–141 (VLLLPLVFTIVASSGLPLLYVGV) form a helical membrane-spanning segment. At 142–170 (PMVAALSVTHCFLPPHPGPTAIATIFEAN) the chain is on the periplasmic side. Residues 171–193 (LGTTLLYGFIITIPTVIVAGPLF) traverse the membrane as a helical segment. Residues 194-218 (SKLLTRFEKAPPEGLFNPHLFSEEE) lie on the Cytoplasmic side of the membrane. A helical membrane pass occupies residues 219–241 (MPSFWNSIFAAVIPVILMAIAAV). The Periplasmic portion of the chain corresponds to 242–253 (CEITLPKTNTVR). Residues 254–276 (LFFEFVGNPAVALFIAIVIAIFT) form a helical membrane-spanning segment. Over 277-290 (LGRRNGRTIEQIMD) the chain is Cytoplasmic. A helical membrane pass occupies residues 291–310 (IIGDSIGAIAMIVFIIAGGG). Over 311-322 (AFKQVLVDSGVG) the chain is Periplasmic. A helical transmembrane segment spans residues 323–345 (HYISHLMTGTTLSPLLMCWTVAA). The Cytoplasmic portion of the chain corresponds to 346–348 (LLR). Residues 349 to 371 (IALGSATVAAITTAGVVLPIINV) form a helical membrane-spanning segment. At 372–377 (THADPA) the chain is on the periplasmic side. The helical transmembrane segment at 378 to 400 (LMVLATGAGSVIASHVNDPGFWL) threads the bilayer. Residues 401-414 (FKGYFNLTVGETLR) are Cytoplasmic-facing. A helical membrane pass occupies residues 415 to 437 (TWTVMETLISIMGLLGVLAINAV). Over 438–439 (LH) the chain is Periplasmic.

This sequence belongs to the GntP permease family.

The protein localises to the cell inner membrane. The enzyme catalyses L-idonate(in) + H(+)(in) = L-idonate(out) + H(+)(out). It catalyses the reaction D-gluconate(in) + H(+)(in) = D-gluconate(out) + H(+)(out). It carries out the reaction 5-dehydro-D-gluconate(in) + H(+)(in) = 5-dehydro-D-gluconate(out) + H(+)(out). Its pathway is carbohydrate acid metabolism; L-idonate degradation. Its function is as follows. Transporter which is probably involved in L-idonate metabolism. Transports L-idonate from the periplasm across the inner membrane. Can also transport D-gluconate and 5-keto-D-gluconate. It has been reported that gluconate uptake probably occurs via a proton-symport mechanism in E.coli. This chain is Gnt-II system L-idonate transporter, found in Escherichia coli (strain K12).